The primary structure comprises 142 residues: Large ribosomal subunit protein uL13 (142 aa).

Belongs to the universal ribosomal protein uL13 family. As to quaternary structure, part of the 50S ribosomal subunit.

This protein is one of the early assembly proteins of the 50S ribosomal subunit, although it is not seen to bind rRNA by itself. It is important during the early stages of 50S assembly. The protein is Large ribosomal subunit protein uL13 of Teredinibacter turnerae (strain ATCC 39867 / T7901).